The following is a 427-amino-acid chain: Histidinol dehydrogenase (427 aa).

Residues Tyr-127, Gln-185, and Asn-208 each coordinate NAD(+). Residues Ser-232, Gln-254, and His-257 each contribute to the substrate site. 2 residues coordinate Zn(2+): Gln-254 and His-257. Catalysis depends on proton acceptor residues Glu-321 and His-322. Residues His-322, Asp-355, Glu-409, and His-414 each coordinate substrate. Asp-355 contributes to the Zn(2+) binding site. Position 414 (His-414) interacts with Zn(2+).

Belongs to the histidinol dehydrogenase family. The cofactor is Zn(2+).

The catalysed reaction is L-histidinol + 2 NAD(+) + H2O = L-histidine + 2 NADH + 3 H(+). Its pathway is amino-acid biosynthesis; L-histidine biosynthesis; L-histidine from 5-phospho-alpha-D-ribose 1-diphosphate: step 9/9. Functionally, catalyzes the sequential NAD-dependent oxidations of L-histidinol to L-histidinaldehyde and then to L-histidine. The sequence is that of Histidinol dehydrogenase from Haemophilus influenzae (strain 86-028NP).